We begin with the raw amino-acid sequence, 356 residues long: MAREWPMTHPSNHPMDHHHQTLQAHLASQGADADCAAVIEALADAARELARQIAIAPLSGIDEGAATVNTDGDIQKALDIVADNLMREALRRAPVAGILSEEGDRPETVNEAAPLCVAIDPLDGSSNLQNNISVGTIFSIRPRGRDVLSSFFEPGTAQRAAGFFVYGPQTCLVLAIDRRVDLYVLHPTLHEFILAKSGIRIPQDTPEFAINASNRRHWSGAVRNYVDECLSGAAGPRGRDFNMRWIASLVAEAYRILMRGGVFLYPADSRPGYREGRLRLVYEAHPMALIMEWAGGSASSGRARILELSARSPHQRAPLIMGDVRLVRDVDMLHEGVEPLFETSDAPLFARRGLFR.

A disordered region spans residues 1-26; that stretch reads MAREWPMTHPSNHPMDHHHQTLQAHL. E101, D120, L122, and D123 together coordinate Mg(2+). Substrate-binding positions include 123-126 and N211; that span reads DGSS. Residue E283 participates in Mg(2+) binding.

The protein belongs to the FBPase class 1 family. Homotetramer. Requires Mg(2+) as cofactor.

The protein resides in the cytoplasm. It carries out the reaction beta-D-fructose 1,6-bisphosphate + H2O = beta-D-fructose 6-phosphate + phosphate. Its pathway is carbohydrate biosynthesis; Calvin cycle. This Bradyrhizobium sp. (strain ORS 278) protein is Fructose-1,6-bisphosphatase class 1.